The following is a 471-amino-acid chain: ATP synthase subunit beta (471 aa).

156 to 163 (GGAGVGKT) contributes to the ATP binding site.

Belongs to the ATPase alpha/beta chains family. In terms of assembly, F-type ATPases have 2 components, CF(1) - the catalytic core - and CF(0) - the membrane proton channel. CF(1) has five subunits: alpha(3), beta(3), gamma(1), delta(1), epsilon(1). CF(0) has three main subunits: a(1), b(2) and c(9-12). The alpha and beta chains form an alternating ring which encloses part of the gamma chain. CF(1) is attached to CF(0) by a central stalk formed by the gamma and epsilon chains, while a peripheral stalk is formed by the delta and b chains.

The protein resides in the cell membrane. It carries out the reaction ATP + H2O + 4 H(+)(in) = ADP + phosphate + 5 H(+)(out). Its function is as follows. Produces ATP from ADP in the presence of a proton gradient across the membrane. The catalytic sites are hosted primarily by the beta subunits. This chain is ATP synthase subunit beta, found in Lysinibacillus sphaericus (strain C3-41).